A 120-amino-acid chain; its full sequence is Glycophorin-A (120 aa).

Residue Gln1 is modified to Pyrrolidone carboxylic acid. The interval 1–40 (QTIATGSPPIAGTSDLSTITSAATPTFTTEQDGREQGDGL) is disordered. O-linked (GalNAc...) threonine glycans are attached at residues Thr2 and Thr5. O-linked (GalNAc...) serine glycosylation occurs at Ser7. Thr13 carries an O-linked (GalNAc...) threonine glycan. O-linked (GalNAc...) serine glycosylation is present at Ser17. The segment covering 17–29 (STITSAATPTFTT) has biased composition (low complexity). Residues Thr18 and Thr20 are each glycosylated (O-linked (GalNAc...) threonine). O-linked (GalNAc...) serine glycosylation occurs at Ser21. 2 O-linked (GalNAc...) threonine glycosylation sites follow: Thr24 and Thr28. A helical transmembrane segment spans residues 50–72 (VITVIILGVMAGIIGIILLLAYV). The interval 78–120 (KRPPADVPPPASTVPSADAPPPVSEDDETSLTSVETDYPGDSQ) is disordered. The segment covering 82–100 (ADVPPPASTVPSADAPPPV) has biased composition (pro residues). Over residues 107–120 (SLTSVETDYPGDSQ) the composition is skewed to polar residues. A Phosphoserine modification is found at Ser119.

This sequence belongs to the glycophorin-A family. As to quaternary structure, homodimer.

It localises to the membrane. Its function is as follows. Glycophorin A is the major intrinsic membrane sialoglycoprotein of the erythrocyte. Appears to be important for the function of SLC4A1 and is required for high activity of SLC4A1. May be involved in translocation of SLC4A1 to the plasma membrane. The sequence is that of Glycophorin-A from Equus caballus (Horse).